The primary structure comprises 532 residues: Copalyl diphosphate synthase (532 aa).

A DXDDTA motif motif is present at residues 313-318 (DTDDTA). The QXXDGSW motif motif lies at 443 to 449 (QSDDGSW).

It belongs to the terpene synthase family. Mg(2+) is required as a cofactor.

It catalyses the reaction (2E,6E,10E)-geranylgeranyl diphosphate = (+)-copalyl diphosphate. Functionally, involved in the biosynthesis of the mercapturic acid derivative diterpene cyslabdan A, a potentiator of the beta-lactam antibiotic imipenem. Catalyzes the conversion of geranylgeranyl diphosphate (GGDP) into (+)-copalyl diphosphate. This is Copalyl diphosphate synthase from Streptomyces cyslabdanicus.